A 310-amino-acid chain; its full sequence is Protein translocase subunit SecF (310 aa).

6 helical membrane-spanning segments follow: residues 18–38 (FFTI…YRGG), 135–155 (QAVY…AFRF), 162–182 (IVSV…VILA), 188–208 (ITIV…TIVL), 240–260 (IVTS…GGEV), and 267–287 (IMII…APLI).

Belongs to the SecD/SecF family. SecF subfamily. In terms of assembly, forms a complex with SecD. Part of the essential Sec protein translocation apparatus which comprises SecA, SecYEG and auxiliary proteins SecDF. Other proteins may also be involved.

It localises to the cell inner membrane. Its function is as follows. Part of the Sec protein translocase complex. Interacts with the SecYEG preprotein conducting channel. SecDF uses the proton motive force (PMF) to complete protein translocation after the ATP-dependent function of SecA. The protein is Protein translocase subunit SecF of Endomicrobium trichonymphae.